The following is a 257-amino-acid chain: Distal membrane-arm assembly complex protein 2 (257 aa).

S253 bears the Phosphoserine mark.

The protein belongs to the ATP synthase subunit s family. Interacts with incompletely assembled mitochondrial NADH:ubiquinone oxidoreductase complex (complex I).

It is found in the mitochondrion. In terms of biological role, required for the assembly of the mitochondrial NADH:ubiquinone oxidoreductase complex (complex I). Involved in the assembly of the distal region of complex I. The sequence is that of Distal membrane-arm assembly complex protein 2 from Homo sapiens (Human).